Reading from the N-terminus, the 82-residue chain is RNA-binding protein TTE2299 (82 aa).

The protein belongs to the eukaryotic ribosomal protein eL8 family.

The polypeptide is RNA-binding protein TTE2299 (Caldanaerobacter subterraneus subsp. tengcongensis (strain DSM 15242 / JCM 11007 / NBRC 100824 / MB4) (Thermoanaerobacter tengcongensis)).